The chain runs to 289 residues: Diaminopimelate epimerase (289 aa).

Positions 13, 47, and 67 each coordinate substrate. Cysteine 76 (proton donor) is an active-site residue. Residues 77–78, asparagine 167, asparagine 200, and 218–219 contribute to the substrate site; these read GN and ER. The Proton acceptor role is filled by cysteine 227. A substrate-binding site is contributed by 228–229; sequence GT.

The protein belongs to the diaminopimelate epimerase family. As to quaternary structure, homodimer.

Its subcellular location is the cytoplasm. It catalyses the reaction (2S,6S)-2,6-diaminopimelate = meso-2,6-diaminopimelate. It functions in the pathway amino-acid biosynthesis; L-lysine biosynthesis via DAP pathway; DL-2,6-diaminopimelate from LL-2,6-diaminopimelate: step 1/1. Catalyzes the stereoinversion of LL-2,6-diaminopimelate (L,L-DAP) to meso-diaminopimelate (meso-DAP), a precursor of L-lysine and an essential component of the bacterial peptidoglycan. The polypeptide is Diaminopimelate epimerase (Burkholderia pseudomallei (strain K96243)).